Here is a 536-residue protein sequence, read N- to C-terminus: DEAD-box ATP-dependent RNA helicase 26 (536 aa).

The interval 1–44 is disordered; that stretch reads MMSGGPSDATHRKRRRRRGPKGSGVDGPSIPRAVTTNGAGPEEE. Positions 11 to 20 are enriched in basic residues; sequence HRKRRRRRGP. The short motif at 74–102 is the Q motif element; the sequence is TRFDQCPVSPLSLKAIKDAGYEKMTQVQE. A Helicase ATP-binding domain is found at 105–282; that stretch reads LPIILQGEDV…HIAMKRGYKF (178 aa). 118–125 is an ATP binding site; sequence AKTGTGKT. The DEAD box signature appears at 230 to 233; that stretch reads DEAD. In terms of domain architecture, Helicase C-terminal spans 316 to 466; it reads VLKKHIAEDA…SIQTGVKDAL (151 aa).

Belongs to the DEAD box helicase family.

It carries out the reaction ATP + H2O = ADP + phosphate + H(+). The chain is DEAD-box ATP-dependent RNA helicase 26 from Oryza sativa subsp. japonica (Rice).